A 156-amino-acid polypeptide reads, in one-letter code: Ribosomal RNA large subunit methyltransferase H (156 aa).

S-adenosyl-L-methionine contacts are provided by residues Leu-73, Gly-104, and 123–128; that span reads LSPLTL.

The protein belongs to the RNA methyltransferase RlmH family. In terms of assembly, homodimer.

The protein resides in the cytoplasm. The catalysed reaction is pseudouridine(1915) in 23S rRNA + S-adenosyl-L-methionine = N(3)-methylpseudouridine(1915) in 23S rRNA + S-adenosyl-L-homocysteine + H(+). Its function is as follows. Specifically methylates the pseudouridine at position 1915 (m3Psi1915) in 23S rRNA. This Aliivibrio salmonicida (strain LFI1238) (Vibrio salmonicida (strain LFI1238)) protein is Ribosomal RNA large subunit methyltransferase H.